We begin with the raw amino-acid sequence, 413 residues long: Phosphopentomutase (413 aa).

Residues Asp-11, Asp-306, His-311, Asp-347, His-348, and His-359 each contribute to the Mn(2+) site.

It belongs to the phosphopentomutase family. Mn(2+) serves as cofactor.

The protein resides in the cytoplasm. It carries out the reaction 2-deoxy-alpha-D-ribose 1-phosphate = 2-deoxy-D-ribose 5-phosphate. It catalyses the reaction alpha-D-ribose 1-phosphate = D-ribose 5-phosphate. The protein operates within carbohydrate degradation; 2-deoxy-D-ribose 1-phosphate degradation; D-glyceraldehyde 3-phosphate and acetaldehyde from 2-deoxy-alpha-D-ribose 1-phosphate: step 1/2. Isomerase that catalyzes the conversion of deoxy-ribose 1-phosphate (dRib-1-P) and ribose 1-phosphate (Rib-1-P) to deoxy-ribose 5-phosphate (dRib-5-P) and ribose 5-phosphate (Rib-5-P), respectively. This is Phosphopentomutase from Helicobacter pylori (strain P12).